A 1086-amino-acid polypeptide reads, in one-letter code: WD repeat-containing protein 64 (1086 aa).

9 WD repeats span residues 129-168 (RRRDVIKCIVKVPQLDLLITASQKGLITVFNSQDTSWITG), 170-199 (DYLGQLKRIVATTERTIIVWDYKAQGSSQE), 321-360 (AMPRGANSFCYCGKANVIVTGGDDKVLRLWHPNISTKPVG), 364-403 (GHMFSITEIVSNEKEQHVISLSSAKVFRVWDIQTLSVLQV), 411-448 (PGDMQIYSMVYDANHGMLITGSGVIDMYPLTRMIQDTK), 453-492 (THEREVNVTLYNKYFHQVLTVCSESVIKVWELETGLQIYQ), 498-537 (GLSIELTCAAIDESGYLFATGAYNGTVKIWDFGSGQEMKM), 560-602 (QVKQ…PYLQ), and 642-683 (IVDV…VKEI). The segment at 724-749 (ICSSTQCDSSKGPQSSKGSKQSIHDA) is disordered. Over residues 732-744 (SSKGPQSSKGSKQ) the composition is skewed to low complexity. WD repeat units lie at residues 765-806 (ASRK…KDML), 809-850 (TKHS…DPPH), and 863-902 (AHSLEIIQVIYVEEKQLVLTASIDGSVRIWNSTSGHYCGY). Residues 1047–1069 (DKVKREEAPEMTEGSRRKSLKRN) form a disordered region. The segment covering 1049–1062 (VKREEAPEMTEGSR) has biased composition (basic and acidic residues).

This is WD repeat-containing protein 64 (Wdr64) from Mus musculus (Mouse).